The sequence spans 329 residues: GIPYWTYNNGDEPLVAISLLDTSNIANQLDSTPRVFYLGGNPEVEFPETQEEQQERHQQKHSLPVGRRGGQHQQEEDGNSVLSGFSSEFLAQTFNTEEDTAKRLRSPRDKRNQIVRVEGGLRIINPEGQQEEEEEEEEEKQRSEQGRNGLEETICSLKIRENIAQPARADLYNPRAGSISTANSLTLPILRYLRLSAEYVRLYRNGIYAPHWNINANSLLYVIRGEGRVRIVNSQGNAVFDNKVRKGQLVVVPQNFVVAEQAGEEEGLEYLVFKTNDRAAVSHVQQVFRATPADVLANAFGLRQRQVTELKLSGNRGPLVHPQSQSQSN.

Disordered regions lie at residues 47–79 and 97–149; these read PETQ…EDGN and EEDT…GRNG. Residues 99–112 are compositionally biased toward basic and acidic residues; that stretch reads DTAKRLRSPRDKRN. Acidic residues predominate over residues 129–138; that stretch reads QQEEEEEEEE. A Cupin type-1 domain is found at 161–308; that stretch reads ENIAQPARAD…AFGLRQRQVT (148 aa).

Belongs to the 11S seed storage protein (globulins) family. As to quaternary structure, hexamer; each subunit is composed of an acidic and a basic chain derived from a single precursor and linked by a disulfide bond.

Functionally, this protein found in the seeds of many leguminous and non-leguminous plants is the source of sulfur-containing amino acids in seed meals. The protein is Legumin type B (LEB6) of Vicia faba (Broad bean).